The primary structure comprises 373 residues: Transaldolase (373 aa).

The active-site Schiff-base intermediate with substrate is the lysine 143.

It belongs to the transaldolase family. Type 2 subfamily.

It is found in the cytoplasm. It carries out the reaction D-sedoheptulose 7-phosphate + D-glyceraldehyde 3-phosphate = D-erythrose 4-phosphate + beta-D-fructose 6-phosphate. The protein operates within carbohydrate degradation; pentose phosphate pathway; D-glyceraldehyde 3-phosphate and beta-D-fructose 6-phosphate from D-ribose 5-phosphate and D-xylulose 5-phosphate (non-oxidative stage): step 2/3. Functionally, transaldolase is important for the balance of metabolites in the pentose-phosphate pathway. The sequence is that of Transaldolase from Mycolicibacterium paratuberculosis (strain ATCC BAA-968 / K-10) (Mycobacterium paratuberculosis).